The following is a 99-amino-acid chain: Protein SPIRAL1-like 5 (99 aa).

Positions 1–12 (MSRGGSFGGGQS) are enriched in gly residues. The disordered stretch occupies residues 1–99 (MSRGGSFGGG…SSLGYLFGDK (99 aa)). Residues 27–39 (TPAPPVAPKPAPP) are compositionally biased toward pro residues. The span at 56 to 73 (KISNNNYQRVQGQNSGNF) shows a compositional bias: polar residues. Ser58 carries the phosphoserine modification.

This sequence belongs to the SPIRAL1 family. In terms of tissue distribution, expressed exclusively in stems and flowers.

Functionally, acts redundantly with SPR1 in maintaining the cortical microtubules organization essential for anisotropic cell growth. In Arabidopsis thaliana (Mouse-ear cress), this protein is Protein SPIRAL1-like 5 (SP1L5).